Consider the following 459-residue polypeptide: Elongation factor 1-alpha 1 (459 aa).

A tr-type G domain is found at 5-242; sequence KTHINIVVIG…DCIIPPQRPT (238 aa). The interval 14–21 is G1; sequence GHVDSGKS. Positions 70–74 are G2; it reads GITID. The segment at 91–94 is G3; it reads DAPG. The segment at 153–156 is G4; that stretch reads NKMD. The G5 stretch occupies residues 194–196; sequence SGF. 5-glutamyl glycerylphosphorylethanolamine occurs at positions 301 and 374.

The protein belongs to the TRAFAC class translation factor GTPase superfamily. Classic translation factor GTPase family. EF-Tu/EF-1A subfamily.

The protein localises to the cytoplasm. This protein promotes the GTP-dependent binding of aminoacyl-tRNA to the A-site of ribosomes during protein biosynthesis. In Oscheius tipulae, this protein is Elongation factor 1-alpha 1 (eft-1).